A 169-amino-acid polypeptide reads, in one-letter code: Ribonuclease H (169 aa).

Residues 3–159 (AHAALTLYTD…CDRLATDAAR (157 aa)) enclose the RNase H type-1 domain. Positions 12, 63, 87, and 151 each coordinate Mg(2+).

It belongs to the RNase H family. As to quaternary structure, monomer. Mg(2+) is required as a cofactor.

Its subcellular location is the cytoplasm. The catalysed reaction is Endonucleolytic cleavage to 5'-phosphomonoester.. Its function is as follows. Endonuclease that specifically degrades the RNA of RNA-DNA hybrids. The polypeptide is Ribonuclease H (Treponema pallidum subsp. pallidum (strain SS14)).